The following is a 152-amino-acid chain: Deoxyuridine 5'-triphosphate nucleotidohydrolase (152 aa).

Residues Arg-71 to Gly-73, Asn-84, Leu-88 to Asp-90, and Met-98 contribute to the substrate site.

Belongs to the dUTPase family. Requires Mg(2+) as cofactor.

The enzyme catalyses dUTP + H2O = dUMP + diphosphate + H(+). The protein operates within pyrimidine metabolism; dUMP biosynthesis; dUMP from dCTP (dUTP route): step 2/2. This enzyme is involved in nucleotide metabolism: it produces dUMP, the immediate precursor of thymidine nucleotides and it decreases the intracellular concentration of dUTP so that uracil cannot be incorporated into DNA. This Shewanella loihica (strain ATCC BAA-1088 / PV-4) protein is Deoxyuridine 5'-triphosphate nucleotidohydrolase.